The chain runs to 287 residues: uncharacterized protein (287 aa).

This is an uncharacterized protein from Archaeoglobus fulgidus (strain ATCC 49558 / DSM 4304 / JCM 9628 / NBRC 100126 / VC-16).